Consider the following 439-residue polypeptide: ATP-dependent DNA helicase dda (439 aa).

32 to 39 contacts ATP; it reads GPAGTGKT.

As to quaternary structure, monomer. Interacts with UvsX and gene 32 protein.

It carries out the reaction Couples ATP hydrolysis with the unwinding of duplex DNA at the replication fork by translocating in the 5'-3' direction. This creates two antiparallel DNA single strands (ssDNA). The leading ssDNA polymer is the template for DNA polymerase III holoenzyme which synthesizes a continuous strand.. The catalysed reaction is ATP + H2O = ADP + phosphate + H(+). DNA helicase that stimulates viral DNA replication and recombination. Plays a role in T4 DNA replication initiation by selecting and activating DNA origins. Acts by dissociating and reassociating with the DNA molecule being unwound. Unwinds DNA as a monomer in a 5'-3' direction at a rate of 250 bp/s and can efficiently displace proteins from the DNA. In Enterobacteria phage T4 (Bacteriophage T4), this protein is ATP-dependent DNA helicase dda (dda).